Consider the following 298-residue polypeptide: Movement protein BC1 (298 aa).

A disordered region spans residues 253–273 (LPEASLDPGDSVSQTQSMTKK).

Belongs to the begomovirus movement protein BC1 family. In terms of assembly, binds to dimeric supercoiled plasmid DNA. In terms of processing, phosphorylated.

It is found in the host cell membrane. It localises to the host microsome membrane. Its subcellular location is the host endoplasmic reticulum membrane. Functionally, transports viral genome to neighboring plant cells directly through plasmosdesmata, without any budding. The movement protein allows efficient cell to cell propagation, by bypassing the host cell wall barrier. Begomovirus genome is shuttled out of nucleus by Nuclear shuttle protein (NSP) and the movement protein transports the DNA-NSP complex to cell plasmodesmata and facilitates further movement across the cell wall. The sequence is that of Movement protein BC1 from Hewittia sublobata (Coralbush).